The sequence spans 473 residues: Argininosuccinate lyase (473 aa).

The protein belongs to the lyase 1 family. Argininosuccinate lyase subfamily.

Its subcellular location is the cytoplasm. It carries out the reaction 2-(N(omega)-L-arginino)succinate = fumarate + L-arginine. The protein operates within amino-acid biosynthesis; L-arginine biosynthesis; L-arginine from L-ornithine and carbamoyl phosphate: step 3/3. This Chelativorans sp. (strain BNC1) protein is Argininosuccinate lyase.